A 310-amino-acid chain; its full sequence is Malate dehydrogenase (310 aa).

Residues 7-12 (GAGNVG) and aspartate 32 each bind NAD(+). Arginine 81 and arginine 87 together coordinate substrate. NAD(+) contacts are provided by residues asparagine 94 and 117–119 (VSN). Positions 119 and 150 each coordinate substrate. Histidine 174 serves as the catalytic Proton acceptor.

The protein belongs to the LDH/MDH superfamily. MDH type 3 family.

It carries out the reaction (S)-malate + NAD(+) = oxaloacetate + NADH + H(+). Functionally, catalyzes the reversible oxidation of malate to oxaloacetate. This chain is Malate dehydrogenase, found in Chlorobium limicola (strain DSM 245 / NBRC 103803 / 6330).